The sequence spans 427 residues: Glutamyl-tRNA(Gln) amidotransferase subunit D (427 aa).

Positions 1–18 (MTADPGDRVRVTHGDASH) are enriched in basic and acidic residues. The interval 1-20 (MTADPGDRVRVTHGDASHEG) is disordered. The Asparaginase/glutaminase domain occupies 80–413 (PTIALISTGG…DDPEAAMQES (334 aa)). Catalysis depends on residues T90, T166, D167, and K243.

Belongs to the asparaginase 1 family. GatD subfamily. Heterodimer of GatD and GatE.

The enzyme catalyses L-glutamyl-tRNA(Gln) + L-glutamine + ATP + H2O = L-glutaminyl-tRNA(Gln) + L-glutamate + ADP + phosphate + H(+). Allows the formation of correctly charged Gln-tRNA(Gln) through the transamidation of misacylated Glu-tRNA(Gln) in organisms which lack glutaminyl-tRNA synthetase. The reaction takes place in the presence of glutamine and ATP through an activated gamma-phospho-Glu-tRNA(Gln). The GatDE system is specific for glutamate and does not act on aspartate. This is Glutamyl-tRNA(Gln) amidotransferase subunit D from Halobacterium salinarum (strain ATCC 29341 / DSM 671 / R1).